The sequence spans 376 residues: Alanine racemase (376 aa).

Lysine 40 serves as the catalytic Proton acceptor; specific for D-alanine. Lysine 40 carries the N6-(pyridoxal phosphate)lysine modification. Residue arginine 138 participates in substrate binding. Residue tyrosine 270 is the Proton acceptor; specific for L-alanine of the active site. Residue methionine 317 participates in substrate binding.

The protein belongs to the alanine racemase family. Pyridoxal 5'-phosphate serves as cofactor.

It carries out the reaction L-alanine = D-alanine. The protein operates within amino-acid biosynthesis; D-alanine biosynthesis; D-alanine from L-alanine: step 1/1. In terms of biological role, catalyzes the interconversion of L-alanine and D-alanine. May also act on other amino acids. In Lactobacillus acidophilus (strain ATCC 700396 / NCK56 / N2 / NCFM), this protein is Alanine racemase (alr).